A 154-amino-acid polypeptide reads, in one-letter code: Superoxide dismutase [Cu-Zn] (154 aa).

Cu cation contacts are provided by His-47, His-49, and His-64. Cys-58 and Cys-147 are joined by a disulfide. 4 residues coordinate Zn(2+): His-64, His-72, His-81, and Asp-84. His-121 contributes to the Cu cation binding site. The span at 124–137 shows a compositional bias: basic and acidic residues; sequence TDDLGRGDSEESKK. The segment at 124–144 is disordered; it reads TDDLGRGDSEESKKTGNAGAR. Arg-144 serves as a coordination point for substrate.

This sequence belongs to the Cu-Zn superoxide dismutase family. As to quaternary structure, homodimer. Requires Cu cation as cofactor. The cofactor is Zn(2+).

The protein resides in the cytoplasm. The catalysed reaction is 2 superoxide + 2 H(+) = H2O2 + O2. Its function is as follows. Destroys radicals which are normally produced within the cells and which are toxic to biological systems. This Emericella nidulans (strain FGSC A4 / ATCC 38163 / CBS 112.46 / NRRL 194 / M139) (Aspergillus nidulans) protein is Superoxide dismutase [Cu-Zn] (sodA).